A 471-amino-acid chain; its full sequence is Cysteine--tRNA ligase (471 aa).

A Zn(2+)-binding site is contributed by Cys-29. The 'HIGH' region motif lies at 31 to 41; sequence PTVYNYIHIGN. 3 residues coordinate Zn(2+): Cys-209, His-234, and Glu-238. The 'KMSKS' region motif lies at 266–270; it reads KMSKS. Residue Lys-269 participates in ATP binding.

The protein belongs to the class-I aminoacyl-tRNA synthetase family. As to quaternary structure, monomer. Zn(2+) is required as a cofactor.

The protein localises to the cytoplasm. The catalysed reaction is tRNA(Cys) + L-cysteine + ATP = L-cysteinyl-tRNA(Cys) + AMP + diphosphate. The protein is Cysteine--tRNA ligase of Listeria monocytogenes serovar 1/2a (strain ATCC BAA-679 / EGD-e).